Consider the following 464-residue polypeptide: Aspartyl protease AED1 (464 aa).

The first 25 residues, 1 to 25 (MSIMRNFLSMIIMLCVCLNWCFAEG), serve as a signal peptide directing secretion. Residues 132–460 (YIVTIGIGTP…DVAGGRVGFA (329 aa)) form the Peptidase A1 domain. Catalysis depends on residues aspartate 150 and aspartate 345. The cysteines at positions 384 and 425 are disulfide-linked.

This sequence belongs to the peptidase A1 family.

The protein resides in the secreted. The protein localises to the extracellular space. Its subcellular location is the apoplast. Functionally, aspartyl protease involved in a homeostatic feedback mechanism regulating systemic immunity. Has only mild or no influence on local defenses. Acts downstream of salicylic acid to suppress systemic immunity. In Arabidopsis thaliana (Mouse-ear cress), this protein is Aspartyl protease AED1.